The primary structure comprises 249 residues: MVAFDANEILTPFCEGHREGAILFDCQRMRQVEYGLFVPAWWGERAHPVSEGGRGSAWFVEASFGNAVLRQYRRGGMIAMLNRDRYFWCGGHRTRSVLEFRLMRELISRGLPVPTPLAACYVRYGVQYRAAILIERLEGVSSLAMCIRGNSKETHWEQIGRMISRFHREGLDHADLNAHNILLDPAGQCWLIDFDRGALRIPATKWRERNLARLLRSLLKIRGERSVDAVYRDFERLRRAYDLAWSRGC.

Residue Asp175 is part of the active site.

This sequence belongs to the protein kinase superfamily. KdkA/RfaP family.

Its subcellular location is the cell inner membrane. It catalyses the reaction an alpha-Kdo-(2-&gt;6)-lipid IVA + ATP = a 4-O-phospho-alpha-Kdo-(2-&gt;6)-lipid IVA + ADP + H(+). It participates in bacterial outer membrane biogenesis; LPS core biosynthesis. Functionally, catalyzes the ATP-dependent phosphorylation of the 3-deoxy-D-manno-octulosonic acid (Kdo) residue in Kdo-lipid IV(A) at the 4-OH position. This chain is 3-deoxy-D-manno-octulosonic acid kinase, found in Xylella fastidiosa (strain M12).